The chain runs to 429 residues: Histidine--tRNA ligase (429 aa).

The protein belongs to the class-II aminoacyl-tRNA synthetase family. In terms of assembly, homodimer.

The protein resides in the cytoplasm. It catalyses the reaction tRNA(His) + L-histidine + ATP = L-histidyl-tRNA(His) + AMP + diphosphate + H(+). The protein is Histidine--tRNA ligase of Streptococcus pneumoniae (strain P1031).